Reading from the N-terminus, the 127-residue chain is Small ribosomal subunit protein uS13 (127 aa).

Positions 92–127 are disordered; sequence HRQGLPVRGQRTRTNARTRRGRRLTVAGKKKAPSKK. Positions 101–127 are enriched in basic residues; it reads QRTRTNARTRRGRRLTVAGKKKAPSKK.

The protein belongs to the universal ribosomal protein uS13 family. In terms of assembly, part of the 30S ribosomal subunit. Forms a loose heterodimer with protein S19. Forms two bridges to the 50S subunit in the 70S ribosome.

Functionally, located at the top of the head of the 30S subunit, it contacts several helices of the 16S rRNA. In the 70S ribosome it contacts the 23S rRNA (bridge B1a) and protein L5 of the 50S subunit (bridge B1b), connecting the 2 subunits; these bridges are implicated in subunit movement. Contacts the tRNAs in the A and P-sites. This Gloeothece citriformis (strain PCC 7424) (Cyanothece sp. (strain PCC 7424)) protein is Small ribosomal subunit protein uS13.